A 126-amino-acid polypeptide reads, in one-letter code: Large ribosomal subunit protein bL19 (126 aa).

This sequence belongs to the bacterial ribosomal protein bL19 family.

Its function is as follows. This protein is located at the 30S-50S ribosomal subunit interface and may play a role in the structure and function of the aminoacyl-tRNA binding site. The sequence is that of Large ribosomal subunit protein bL19 from Dechloromonas aromatica (strain RCB).